The sequence spans 397 residues: Tryptophan synthase beta chain (397 aa).

Lys88 bears the N6-(pyridoxal phosphate)lysine mark.

The protein belongs to the TrpB family. In terms of assembly, tetramer of two alpha and two beta chains. Pyridoxal 5'-phosphate serves as cofactor.

It carries out the reaction (1S,2R)-1-C-(indol-3-yl)glycerol 3-phosphate + L-serine = D-glyceraldehyde 3-phosphate + L-tryptophan + H2O. Its pathway is amino-acid biosynthesis; L-tryptophan biosynthesis; L-tryptophan from chorismate: step 5/5. The beta subunit is responsible for the synthesis of L-tryptophan from indole and L-serine. In Haemophilus influenzae (strain ATCC 51907 / DSM 11121 / KW20 / Rd), this protein is Tryptophan synthase beta chain (trpB).